We begin with the raw amino-acid sequence, 528 residues long: Na(+)/H(+) antiporter NhaB (528 aa).

The next 11 membrane-spanning stretches (helical) occupy residues 23 to 43 (VAII…NPFV), 45 to 65 (GWLL…CYPL), 90 to 110 (LVAN…IYFM), 136 to 156 (CFAA…AVVI), 204 to 224 (LLMH…VGEP), 237 to 257 (FGEF…CGLI), 305 to 325 (GIIA…VGLI), 350 to 370 (EEAL…AVII), 392 to 412 (LALF…VFVG), 450 to 470 (ATPN…APLI), and 479 to 499 (VMAL…IMFF).

The protein belongs to the NhaB Na(+)/H(+) (TC 2.A.34) antiporter family.

It is found in the cell inner membrane. The catalysed reaction is 2 Na(+)(in) + 3 H(+)(out) = 2 Na(+)(out) + 3 H(+)(in). Its function is as follows. Na(+)/H(+) antiporter that extrudes sodium in exchange for external protons. Can also transport lithium and potassium. The protein is Na(+)/H(+) antiporter NhaB of Vibrio parahaemolyticus serotype O3:K6 (strain RIMD 2210633).